The sequence spans 128 residues: Large ribosomal subunit protein uL22 (128 aa).

The protein belongs to the universal ribosomal protein uL22 family. As to quaternary structure, part of the 50S ribosomal subunit.

Its function is as follows. This protein binds specifically to 23S rRNA; its binding is stimulated by other ribosomal proteins, e.g. L4, L17, and L20. It is important during the early stages of 50S assembly. It makes multiple contacts with different domains of the 23S rRNA in the assembled 50S subunit and ribosome. The globular domain of the protein is located near the polypeptide exit tunnel on the outside of the subunit, while an extended beta-hairpin is found that lines the wall of the exit tunnel in the center of the 70S ribosome. This chain is Large ribosomal subunit protein uL22, found in Nitrobacter winogradskyi (strain ATCC 25391 / DSM 10237 / CIP 104748 / NCIMB 11846 / Nb-255).